The following is a 904-amino-acid chain: Patched domain-containing protein 4 (904 aa).

Residues 41 to 61 traverse the membrane as a helical segment; that stretch reads HPVFFLTVPAVLTITFGLSAL. Asn-149 carries an N-linked (GlcNAc...) asparagine glycan. The region spanning 291-450 is the SSD domain; that stretch reads TRSKVLVSLV…FSFFGSCLVF (160 aa). The next 6 helical transmembrane spans lie at 295–312, 323–343, 351–371, 394–414, 431–451, and 523–543; these read VLVS…SSSM, GLLG…IFFI, TLLG…FELL, VMVT…MGAS, VSIL…LVFA, and PFVV…CLQI. N-linked (GlcNAc...) asparagine glycosylation occurs at Asn-625. The next 3 helical transmembrane spans lie at 718–738, 744–764, and 771–791; these read PVLI…FLVI, FWLI…MTLW, and ISIL…APLL. Asn-820 carries an N-linked (GlcNAc...) asparagine glycan. Helical transmembrane passes span 823–843 and 845–865; these read SFLI…FTLF and CLLL…PVFL.

The protein belongs to the patched family.

The protein localises to the membrane. Functionally, could act as a repressor of canonical hedgehog signaling by antagonizing the effects of SMO, as suggested by down-regulation of hedgehog target genes, including GLI1, PTCH1, and PTCH2 in PTCHD4-expressing cells. This is Patched domain-containing protein 4 (Ptchd4) from Mus musculus (Mouse).